The sequence spans 153 residues: Insulin-like growth factor 1 (153 aa).

A b region spans residues 49–77; the sequence is GPETLCGAELVDALQFVCGDRGFYFSKPT. 3 cysteine pairs are disulfide-bonded: Cys-54–Cys-96, Cys-66–Cys-109, and Cys-95–Cys-100. The c stretch occupies residues 78–89; sequence GYGSSSRRLHHK. Residues 90 to 110 are a; it reads GIVDECCFQSCDLRRLEMYCA. The interval 111–118 is d; the sequence is PIKPPKSA. Positions 119 to 153 are cleaved as a propeptide — e peptide; sequence RSVRAQRHTDMPKAQKEVHLKNTSRGNTGNRNYRM. The segment at 119–153 is disordered; sequence RSVRAQRHTDMPKAQKEVHLKNTSRGNTGNRNYRM. The span at 125-138 shows a compositional bias: basic and acidic residues; it reads RHTDMPKAQKEVHL. Over residues 139-153 the composition is skewed to polar residues; the sequence is KNTSRGNTGNRNYRM.

It belongs to the insulin family. Forms a ternary complex with IGFR1 and ITGAV:ITGB3. Forms a ternary complex with IGFR1 and ITGA6:ITGB4. Forms a ternary complex with IGFBP3 and ALS.

Its subcellular location is the secreted. The insulin-like growth factors, isolated from plasma, are structurally and functionally related to insulin but have a much higher growth-promoting activity. Acts as a ligand for IGF1R. Binds to the alpha subunit of IGF1R, leading to the activation of the intrinsic tyrosine kinase activity which autophosphorylates tyrosine residues in the beta subunit thus initiatiating a cascade of down-stream signaling events leading to activation of the PI3K-AKT/PKB and the Ras-MAPK pathways. Binds to integrins. Its binding to integrins and subsequent ternary complex formation with integrins and IGFR1 are essential for IGF1 signaling. This is Insulin-like growth factor 1 from Gallus gallus (Chicken).